The sequence spans 639 residues: UvrABC system protein C (639 aa).

Positions 20–97 (ERSGVYRMFD…IKKFQPKFNI (78 aa)) constitute a GIY-YIG domain. In terms of domain architecture, UVR spans 207 to 242 (KELQENLSRKMEELSSQMRFEEAAEIRDRIKALSYV).

This sequence belongs to the UvrC family. As to quaternary structure, interacts with UvrB in an incision complex.

The protein resides in the cytoplasm. In terms of biological role, the UvrABC repair system catalyzes the recognition and processing of DNA lesions. UvrC both incises the 5' and 3' sides of the lesion. The N-terminal half is responsible for the 3' incision and the C-terminal half is responsible for the 5' incision. In Rickettsia conorii (strain ATCC VR-613 / Malish 7), this protein is UvrABC system protein C.